Reading from the N-terminus, the 345-residue chain is S-adenosylmethionine:tRNA ribosyltransferase-isomerase (345 aa).

The protein belongs to the QueA family. In terms of assembly, monomer.

The protein resides in the cytoplasm. The catalysed reaction is 7-aminomethyl-7-carbaguanosine(34) in tRNA + S-adenosyl-L-methionine = epoxyqueuosine(34) in tRNA + adenine + L-methionine + 2 H(+). It participates in tRNA modification; tRNA-queuosine biosynthesis. Functionally, transfers and isomerizes the ribose moiety from AdoMet to the 7-aminomethyl group of 7-deazaguanine (preQ1-tRNA) to give epoxyqueuosine (oQ-tRNA). The polypeptide is S-adenosylmethionine:tRNA ribosyltransferase-isomerase (Helicobacter pylori (strain ATCC 700392 / 26695) (Campylobacter pylori)).